The primary structure comprises 283 residues: Protoheme IX farnesyltransferase (283 aa).

9 consecutive transmembrane segments (helical) span residues 6–26 (LLLT…AGFL), 35–55 (FGLF…GCVF), 85–105 (AIVF…FYTN), 106–126 (LLTL…YSIW), 131–151 (VYGT…GYCA), 160–180 (AFIL…SIAI), 207–227 (ILLY…FHFT), 230–250 (LYLI…LRGL), and 262–282 (MFRF…FDLV).

It belongs to the UbiA prenyltransferase family. Protoheme IX farnesyltransferase subfamily.

The protein resides in the cell inner membrane. The catalysed reaction is heme b + (2E,6E)-farnesyl diphosphate + H2O = Fe(II)-heme o + diphosphate. The protein operates within porphyrin-containing compound metabolism; heme O biosynthesis; heme O from protoheme: step 1/1. In terms of biological role, converts heme B (protoheme IX) to heme O by substitution of the vinyl group on carbon 2 of heme B porphyrin ring with a hydroxyethyl farnesyl side group. This Protochlamydia amoebophila (strain UWE25) protein is Protoheme IX farnesyltransferase.